Consider the following 873-residue polypeptide: Paramyosin (873 aa).

Residues 1–25 (MSSRSSKYMYKSSGGAGDISIEYGT) form a nonhelical region region. Positions 26 to 852 (DLGALTRLED…IRAKHRSWVT (827 aa)) form a coiled coil. Residues 853–873 (TSQVPGGTRQVFVTEESSQNF) form a nonhelical region region.

This sequence belongs to the paramyosin family. In terms of assembly, homodimer. Binds IgG and collagen. In terms of tissue distribution, expressed in all tissues except in saliva.

Its subcellular location is the cytoplasm. The protein resides in the myofibril. Paramyosin is a major structural component of many thick filaments isolated from invertebrate muscles. The chain is Paramyosin (PRM) from Rhipicephalus microplus (Cattle tick).